A 791-amino-acid polypeptide reads, in one-letter code: MSEDGASKCQDSIQLIDEQKQFNEKTLEYFKRCIGERDVGLDYHVISVFGSQSSGKSTLLNALFNTKFDTMNAQVKRQQTTKGIWIAHTREVQTTANTGKGVDFFVLDVEGSDGAERGEDKDFERKAALFALATSEVLIVNMWEQQVGLYQGNNMGLLKTVFEVNLSLFGHKKDKQKILLLFVVRDFTGFTPLSSLQETLTNELQAMWSELNKPAGAEGSSLDDFFDFAFTGLSHKLFKPEEFASDVAKLGDKFTDLKREDYYLSGKYHQGLPLDGWSFYADSCWEQIENNKDLDLPTQQTLVANFKTEEIANNAFEHFSTAFSKLSSSLPGPELAASMKELKDQCTKEYDNYGSRYMKAVYLEKRGELLDKIKTKFSDAIAVHMSKLFNSLVSTFQSTVAQNAACQPLSERLKVGKERVMQVFEQETSDFVALELIPSVDADASALLEKIDELAERERGKEMKAIILRAKKYQFTHTRDDIVHLLSHPQDNVWQLVMDHFDDVFRRSVLKYKLPNLGDVTDESTAYDFQLDLIEEDNYALYLKIRSNAWTILYDIIHQYLKEDNVVSILRERFESKFRYDQNDVPRLWKNEEEVDAGFKVAREHALNMLNTLSIASCDGVEIVPDVPLASDEDEAQDEQGLYNEKRFGHILTAIQKEKIIQHFKRFANVAVVEAKRSTIKSHTHIPMWIYAIIAVLGWNEFMLVLRNPLFIALMLLIVGAAYTVHRLNLWTPLATFASAAVNETTHAVKAKLRTILLDDEHPKNASSKPVESFEMQDLSVNETKENANES.

The Cytoplasmic segment spans residues 1–685 (MSEDGASKCQ…KRSTIKSHTH (685 aa)). One can recognise a GB1/RHD3-type G domain in the interval 40–268 (GLDYHVISVF…REDYYLSGKY (229 aa)). 50–57 (GSQSSGKS) serves as a coordination point for GTP. The helical transmembrane segment at 686–706 (IPMWIYAIIAVLGWNEFMLVL) threads the bilayer. Topologically, residues 707–709 (RNP) are lumenal. Residues 710 to 730 (LFIALMLLIVGAAYTVHRLNL) form a helical membrane-spanning segment. Topologically, residues 731–791 (WTPLATFASA…NETKENANES (61 aa)) are cytoplasmic. Positions 763 to 791 (PKNASSKPVESFEMQDLSVNETKENANES) are disordered.

The protein belongs to the TRAFAC class dynamin-like GTPase superfamily. GB1/RHD3 GTPase family. RHD3 subfamily.

It localises to the endoplasmic reticulum membrane. Cooperates with the reticulon proteins and tubule-shaping DP1 family proteins to generate and maintain the structure of the tubular endoplasmic reticulum network. Has GTPase activity, which is required for its function in ER organization. The chain is Protein SEY1 from Eremothecium gossypii (strain ATCC 10895 / CBS 109.51 / FGSC 9923 / NRRL Y-1056) (Yeast).